Reading from the N-terminus, the 198-residue chain is Virion infectivity factor (198 aa).

An RNA-binding region spans residues 76–115; that stretch reads GERPWHLGHGIGLEWRQGKYSTQIDPETADQLIHTRYFTC. Threonine 97 carries the post-translational modification Phosphothreonine; by host MAP4K1. Residues 109-140 carry the HCCH motif motif; it reads HTRYFTCFAAGAVRQAILGERILTFCHFQSGH. Phosphothreonine; by host is present on threonine 145. Positions 145-154 match the BC-box-like motif motif; it reads TLQFLAFRKV. A multimerization region spans residues 152 to 170; the sequence is RKVVESQDKQPKGPRRPLP. Residues 159 to 198 form a disordered region; sequence DKQPKGPRRPLPSVTKLTEDRWNKHRTTTGRRENHTLSGC. Serine 171 carries the post-translational modification Phosphoserine; by host MAP4K1. Residues 177-178 form a membrane association region; sequence ED. The segment covering 188 to 198 has biased composition (basic and acidic residues); the sequence is GRRENHTLSGC.

It belongs to the primate lentivirus group Vif protein family. Homomultimer; in vitro and presumably in vivo. Interacts with viral Pr55Gag precursor, host APOBEC3G, UBCE7IP1 isoform 3/ZIN, ABCE1 and possibly with SAT. Forms an E3 ligase complex by interacting with host CUL5 and elongin BC complex (ELOB and ELOC). Post-translationally, highly phosphorylated on serine and threonine residues. Thr-97 and Ser-171 are phosphorylated by the mitogen activated kinase MAP4K1. In terms of processing, polyubiquitinated and degraded by the proteasome in the presence of APOBEC3G.

The protein localises to the host cytoplasm. It localises to the host cell membrane. The protein resides in the virion. Its function is as follows. Counteracts the innate antiviral activity of APOBEC3G. Forms a complex with host APOBEC3G thus preventing the entry of this lethally hypermutating enzyme into progeny virions. Functions as an adapter molecule, recruiting APOBEC3G to the ubiquitin-proteasome machinery. Targets APOBEC3G for degradation through the assembly with elongin BC complex, CUL5 and RBX1. Binds viral RNA and affects the stability of viral nucleoprotein core. May play a role in viral morphology. Interacts with host ABCE1, which seems to be involved in lentiviruses capsid formation and displays RNase L inhibitor activity. This interaction may play a role in protecting viral RNA from damage during viral assembly. May interact with host SAT, which is a regulator of polyamine cell level. This interaction may be relevant since polyamines affect viral RNA properties. The chain is Virion infectivity factor from Pan troglodytes (Chimpanzee).